Reading from the N-terminus, the 103-residue chain is Transcriptional regulator WhiB7 (103 aa).

Residues Cys-17, Cys-49, Cys-52, and Cys-58 each contribute to the [4Fe-4S] cluster site. In terms of domain architecture, 4Fe-4S Wbl-type spans 25–82 (PCHVGDPDLWFAENPGDLERAKALCAGCPIRVQCLTAALERQEPWGVWGGEILDRGSI). Residues 82–103 (IVARKRPRGRPRKDSGGNPAAA) are disordered.

It belongs to the WhiB family. [4Fe-4S] cluster is required as a cofactor. In terms of processing, the Fe-S cluster can be nitrosylated by nitric oxide (NO). Post-translationally, upon Fe-S cluster removal intramolecular disulfide bonds are formed.

It is found in the cytoplasm. Acts as a transcriptional regulator. Probably redox-responsive. The apo- but not holo-form probably binds DNA. Participates in maintaining a reduced cytoplasmic (MSH/MSSM) environment under normal growth conditions and directly or indirectly controls the concentration of mycothiol (MSH + MSSM). The protein is Transcriptional regulator WhiB7 (whiB7) of Mycolicibacterium smegmatis (strain ATCC 700084 / mc(2)155) (Mycobacterium smegmatis).